The chain runs to 116 residues: MSLIMSSVVATALVSLILAFIAFWLPSLKPDNEKLSPYECGFDPLGSARLPFSMRFFLIAILFLLFDLEIALLLPLPWGNQLFSPFSTLLWTTTILVLLTLGLIYEWFQGGLEWAE.

A run of 3 helical transmembrane segments spans residues 8 to 28 (VVATALVSLILAFIAFWLPSL), 56 to 76 (FFLIAILFLLFDLEIALLLPL), and 88 to 108 (TLLWTTTILVLLTLGLIYEWF).

The protein belongs to the complex I subunit 3 family.

It is found in the mitochondrion membrane. The enzyme catalyses a ubiquinone + NADH + 5 H(+)(in) = a ubiquinol + NAD(+) + 4 H(+)(out). In terms of biological role, core subunit of the mitochondrial membrane respiratory chain NADH dehydrogenase (Complex I) that is believed to belong to the minimal assembly required for catalysis. Complex I functions in the transfer of electrons from NADH to the respiratory chain. The immediate electron acceptor for the enzyme is believed to be ubiquinone. This Scyliorhinus canicula (Small-spotted catshark) protein is NADH-ubiquinone oxidoreductase chain 3 (MT-ND3).